A 786-amino-acid polypeptide reads, in one-letter code: Endonuclease MutS2 (786 aa).

Residue 335–342 participates in ATP binding; the sequence is GPNTGGKT. Residues 711-786 form the Smr domain; the sequence is LDLRGERFEN…GLGVTVVELK (76 aa).

The protein belongs to the DNA mismatch repair MutS family. MutS2 subfamily. In terms of assembly, homodimer. Binds to stalled ribosomes, contacting rRNA.

In terms of biological role, endonuclease that is involved in the suppression of homologous recombination and thus may have a key role in the control of bacterial genetic diversity. Its function is as follows. Acts as a ribosome collision sensor, splitting the ribosome into its 2 subunits. Detects stalled/collided 70S ribosomes which it binds and splits by an ATP-hydrolysis driven conformational change. Acts upstream of the ribosome quality control system (RQC), a ribosome-associated complex that mediates the extraction of incompletely synthesized nascent chains from stalled ribosomes and their subsequent degradation. Probably generates substrates for RQC. This Bacillus cereus (strain AH820) protein is Endonuclease MutS2.